The primary structure comprises 904 residues: Polycystin-2 (904 aa).

The interval 1–102 (MSSSRVRPQA…SSSGGVPGNF (102 aa)) is disordered. At 1–155 (MSSSRVRPQA…NSNREMYLKT (155 aa)) the chain is on the cytoplasmic side. Positions 8–20 (PQAPQSPAASASA) are enriched in low complexity. The span at 26–38 (EGIEMEKMHHEEV) shows a compositional bias: basic and acidic residues. Over residues 86–96 (SVSTTSSSSSG) the composition is skewed to low complexity. The helical transmembrane segment at 156–177 (VLREMITYILFLLTLCIITYGM) threads the bilayer. Residues 178–404 (VSTNMYYYTK…TVRLLRYVSS (227 aa)) lie on the Extracellular side of the membrane. N235, N241, and N264 each carry an N-linked (GlcNAc...) asparagine glycan. A disulfide bridge links C267 with C280. A glycan (N-linked (GlcNAc...) asparagine) is linked at N298. Residues 405-425 (WDYFVGMCEVSFCLFVLYYLV) traverse the membrane as a helical segment. The Cytoplasmic segment spans residues 426 to 441 (EEALEIRLHRLRYFKS). The helical transmembrane segment at 442–462 (LWNCLDVLIVALSVPAIIMNI) threads the bilayer. The Extracellular segment spans residues 463–489 (CRTSAVSHRLHFLLENHSTYPNFEPLA). Residue N478 is glycosylated (N-linked (GlcNAc...) asparagine). Residues 490–510 (RLQVHFNNLAAIIVFLSWVKL) form a helical membrane-spanning segment. Over 511 to 534 (FKFINFNKTMNQLSTTMSRCAKDL) the chain is Cytoplasmic. The helical transmembrane segment at 535 to 556 (MGFAIMFFIVFLAYAQLAYLVF) threads the bilayer. The Extracellular segment spans residues 557–568 (GTQVNDFSTFQA). The segment at residues 569–583 (CIFTQFRIILGDFDF) is an intramembrane region (pore-forming). L578 serves as a coordination point for Ca(2+). The Selectivity filter motif lies at 578–580 (LGD). The Extracellular portion of the chain corresponds to 584–591 (SEIEEADS). A helical membrane pass occupies residues 592–612 (VLGPIYFTTFVFFIFMILLNM). The Cytoplasmic segment spans residues 613–904 (FLAIINDTYS…DAAASGPAHL (292 aa)). The EF-hand 1 domain occupies 687–722 (HSDAEIEAIFAKYDLDGDQELTEHEHQQMRDDLEKE). D700, D702, D704, E706, and E711 together coordinate Ca(2+). Residues 708–732 (TEHEHQQMRDDLEKEREDLDLEHSS) are compositionally biased toward basic and acidic residues. Disordered regions lie at residues 708–770 (TEHE…SSGG) and 854–904 (ESDD…PAHL). Residues 740–759 (RSFSRSQDDSEEDDDEDSGH) are linker. Residues 768-786 (SGGVSYEEFQVLVRRVDRM) form the EF-hand 2 domain. The stretch at 770-809 (GVSYEEFQVLVRRVDRMEHSIGSIVSKIDAVIVKLEAMER) forms a coiled coil. A compositionally biased stretch (low complexity) spans 878-890 (LRPRSSRPPSSLS).

Belongs to the polycystin family. Homotetramer. Component of the heterotetrameric polycystin channel complex with pkd1; the tetramer contains one pkd1 chain and three pkd2 chains. Interacts with pkd1l1. Post-translationally, phosphorylated. Phosphorylation is important for protein function; a mutant human construct that lacks the N-terminal phosphorylation sites cannot complement a zebrafish pkd2-deficient mutant. In terms of processing, N-glycosylated. The four subunits in a tetramer probably differ in the extent of glycosylation; simultaneous glycosylation of all experimentally validated sites would probably create steric hindrance. Sumoylated by SUMO1; sumoylation regulates PKD2 membrane recycling. In terms of tissue distribution, detected along cilia and at the cilium basal body in Kupffer's vesicle at the 10 somite stage. Detected in heart at 48hpf. Detected in muscle and pronephric kidney at 48 hpf. Detected on trunk muscle sarcolemma and sarcomere, on ependymal cell cilia in brain, at the apical cell membrane in epithelial cells in the ear, at the lateral line organ and olfactory placode at 56 hpf. Detected in adult kidney (at protein level).

It localises to the basolateral cell membrane. The protein resides in the cell membrane. The protein localises to the sarcolemma. Its subcellular location is the cytoplasm. It is found in the myofibril. It localises to the sarcomere. The protein resides in the sarcoplasmic reticulum membrane. The protein localises to the apical cell membrane. Its subcellular location is the endoplasmic reticulum membrane. It is found in the cell projection. It localises to the cilium. The protein resides in the cytoskeleton. The protein localises to the cilium basal body. Its subcellular location is the cytoplasmic vesicle membrane. It carries out the reaction K(+)(in) = K(+)(out). It catalyses the reaction Na(+)(in) = Na(+)(out). The catalysed reaction is Ca(2+)(in) = Ca(2+)(out). With respect to regulation, channel activity is regulated by phosphorylation. Channel activity is regulated by intracellular Ca(2+). In terms of biological role, forms a nonselective cation channel. Can function as a homotetrameric ion channel or can form heteromer with PKD1. Displays distinct function depending on its subcellular localization and regulation by its binding partners. In the primary cilium functions as a cation channel, with a preference for monovalent cations over divalent cations that allows K(+), Na(+) and Ca(2+) influx, with low selectivity for Ca(2+). In the endoplasmic reticulum, likely functions as a K(+) channel to facilitate Ca(2+) release. Required for normal oscillation of Ca(2+) levels within cilia; these oscillations of the intraciliary Ca(2+) levels can trigger cytoplasmic Ca(2+) signaling cascades. Required for normal temporal variation of the intracellular Ca(2+) levels in the heart. Plays a role in fluid-flow mechanosensation. Required for normal specification of the body left-right axis during embryogenesis, most likely via its role in ciliary Ca(2+) oscillations in Kupffer's vesicle. In Danio rerio (Zebrafish), this protein is Polycystin-2.